The sequence spans 387 residues: Alkanesulfonate monooxygenase (387 aa).

Positions 365–387 (HNSGPFGETVGNDYRPSRLASQS) are disordered.

This sequence belongs to the SsuD family.

The catalysed reaction is an alkanesulfonate + FMNH2 + O2 = an aldehyde + FMN + sulfite + H2O + 2 H(+). In terms of biological role, catalyzes the desulfonation of aliphatic sulfonates. This Bradyrhizobium diazoefficiens (strain JCM 10833 / BCRC 13528 / IAM 13628 / NBRC 14792 / USDA 110) protein is Alkanesulfonate monooxygenase.